The chain runs to 234 residues: Orotidine 5'-phosphate decarboxylase (234 aa).

Residues aspartate 10, lysine 31, aspartate 58–threonine 67, threonine 121, arginine 183, glutamine 192, glycine 212, and arginine 213 each bind substrate. Lysine 60 serves as the catalytic Proton donor.

Belongs to the OMP decarboxylase family. Type 1 subfamily. As to quaternary structure, homodimer.

The catalysed reaction is orotidine 5'-phosphate + H(+) = UMP + CO2. Its pathway is pyrimidine metabolism; UMP biosynthesis via de novo pathway; UMP from orotate: step 2/2. Its function is as follows. Catalyzes the decarboxylation of orotidine 5'-monophosphate (OMP) to uridine 5'-monophosphate (UMP). This is Orotidine 5'-phosphate decarboxylase from Halalkalibacterium halodurans (strain ATCC BAA-125 / DSM 18197 / FERM 7344 / JCM 9153 / C-125) (Bacillus halodurans).